Consider the following 264-residue polypeptide: Thymidylate synthase (264 aa).

Residue arginine 21 coordinates dUMP. Position 51 (histidine 51) interacts with (6R)-5,10-methylene-5,6,7,8-tetrahydrofolate. DUMP is bound at residue 126-127 (RR). Residue cysteine 146 is the Nucleophile of the active site. DUMP contacts are provided by residues 166–169 (RSAD), asparagine 177, and 207–209 (HLY). Aspartate 169 provides a ligand contact to (6R)-5,10-methylene-5,6,7,8-tetrahydrofolate. Serine 263 lines the (6R)-5,10-methylene-5,6,7,8-tetrahydrofolate pocket.

The protein belongs to the thymidylate synthase family. Bacterial-type ThyA subfamily. Homodimer.

It is found in the cytoplasm. It carries out the reaction dUMP + (6R)-5,10-methylene-5,6,7,8-tetrahydrofolate = 7,8-dihydrofolate + dTMP. The protein operates within pyrimidine metabolism; dTTP biosynthesis. Its function is as follows. Catalyzes the reductive methylation of 2'-deoxyuridine-5'-monophosphate (dUMP) to 2'-deoxythymidine-5'-monophosphate (dTMP) while utilizing 5,10-methylenetetrahydrofolate (mTHF) as the methyl donor and reductant in the reaction, yielding dihydrofolate (DHF) as a by-product. This enzymatic reaction provides an intracellular de novo source of dTMP, an essential precursor for DNA biosynthesis. This chain is Thymidylate synthase, found in Neisseria meningitidis serogroup C / serotype 2a (strain ATCC 700532 / DSM 15464 / FAM18).